A 118-amino-acid polypeptide reads, in one-letter code: Myotrophin (118 aa).

At C2 the chain carries N-acetylcysteine. An ANK 1 repeat occupies 2 to 30 (CDKEFMWALKNGDLDEVKDYVAKGEDVNR). K4, K11, and K24 each carry N6-acetyllysine. A Phosphothreonine modification is found at T31. 2 ANK repeats span residues 34 to 66 (GGRK…APDK) and 67 to 99 (HHIT…VKGP).

This sequence belongs to the myotrophin family. Interacts with RELA. Interacts with the heterodimer formed by CAPZA1 and CAPZB.

Its subcellular location is the cytoplasm. The protein resides in the nucleus. It localises to the perinuclear region. Promotes dimerization of NF-kappa-B subunits and regulates NF-kappa-B transcription factor activity. Promotes growth of cardiomyocytes, but not cardiomyocyte proliferation. Promotes cardiac muscle hypertrophy. Plays a role in the regulation of the growth of actin filaments. Inhibits the activity of the F-actin-capping protein complex formed by the CAPZA1 and CAPZB heterodimer. The chain is Myotrophin (MTPN) from Bos taurus (Bovine).